The sequence spans 67 residues: Large ribosomal subunit protein uL29 (67 aa).

Belongs to the universal ribosomal protein uL29 family.

The polypeptide is Large ribosomal subunit protein uL29 (Ehrlichia ruminantium (strain Gardel)).